Consider the following 344-residue polypeptide: tRNA N6-adenosine threonylcarbamoyltransferase (344 aa).

Fe cation contacts are provided by H111 and H115. Substrate is bound by residues 134–138 (LVSGG), D167, G180, and N272. Residue D300 participates in Fe cation binding.

This sequence belongs to the KAE1 / TsaD family. It depends on Fe(2+) as a cofactor.

It is found in the cytoplasm. It catalyses the reaction L-threonylcarbamoyladenylate + adenosine(37) in tRNA = N(6)-L-threonylcarbamoyladenosine(37) in tRNA + AMP + H(+). Functionally, required for the formation of a threonylcarbamoyl group on adenosine at position 37 (t(6)A37) in tRNAs that read codons beginning with adenine. Is involved in the transfer of the threonylcarbamoyl moiety of threonylcarbamoyl-AMP (TC-AMP) to the N6 group of A37, together with TsaE and TsaB. TsaD likely plays a direct catalytic role in this reaction. This chain is tRNA N6-adenosine threonylcarbamoyltransferase, found in Idiomarina loihiensis (strain ATCC BAA-735 / DSM 15497 / L2-TR).